An 87-amino-acid chain; its full sequence is Small ribosomal subunit protein bS18 (87 aa).

This sequence belongs to the bacterial ribosomal protein bS18 family. Part of the 30S ribosomal subunit. Forms a tight heterodimer with protein bS6.

Its function is as follows. Binds as a heterodimer with protein bS6 to the central domain of the 16S rRNA, where it helps stabilize the platform of the 30S subunit. This is Small ribosomal subunit protein bS18 from Sulfurimonas denitrificans (strain ATCC 33889 / DSM 1251) (Thiomicrospira denitrificans (strain ATCC 33889 / DSM 1251)).